Reading from the N-terminus, the 634-residue chain is DNA gyrase subunit B (634 aa).

The segment at 1–220 (MSYDASAIRV…EEVFLDKGGV (220 aa)) is ATPase domain. A transducer domain region spans residues 221–390 (ASFAKALAEG…EAARKARELV (170 aa)). In terms of domain architecture, Toprim spans 416–534 (AELFIVEGDS…RGHVYIAQPP (119 aa)). Positions 422, 499, and 501 each coordinate Mg(2+).

Belongs to the type II topoisomerase GyrB family. In terms of assembly, heterotetramer, composed of two GyrA and two GyrB chains. Non-hydrolyzable ATP analogs induce dimerization, novobiocin also induces a small amount of dimerization. The two subunits form an intertwined dimer where the GyrB ATPase transducer helix of 1 subunit connects to the Toprim domain of the other GyrB subunit through a 10 residue linker. In the heterotetramer, GyrA contains the active site tyrosine that forms a covalent intermediate with the DNA, while GyrB binds cofactors and catalyzes ATP hydrolysis. Mg(2+) is required as a cofactor. Requires Mn(2+) as cofactor. The cofactor is Ca(2+).

It localises to the cytoplasm. It carries out the reaction ATP-dependent breakage, passage and rejoining of double-stranded DNA.. In terms of biological role, a type II topoisomerase that negatively supercoils closed circular double-stranded (ds) DNA in an ATP-dependent manner. It probably also catalyzes the interconversion of other topological isomers of double-stranded DNA rings, including catenanes. Relaxes negatively supercoiled DNA in an ATP-independent manner. At comparable concentrations T.thermophilus gyrase does not introduce as many negative supercoils into DNA as the E.coli enzyme. Negative supercoiling favors strand separation, and DNA replication, transcription, recombination and repair, all of which involve strand separation. Type II topoisomerases break and join 2 DNA strands simultaneously in an ATP-dependent manner. This Thermus thermophilus (strain ATCC 27634 / DSM 579 / HB8) protein is DNA gyrase subunit B.